The sequence spans 106 residues: uncharacterized protein (106 aa).

2 helical membrane passes run 43-63 and 86-106; these read CSTI…LAIV and IPEL…FSLF.

The protein localises to the membrane. This is an uncharacterized protein from Saccharomyces cerevisiae (strain ATCC 204508 / S288c) (Baker's yeast).